The sequence spans 316 residues: Phosphate acetyltransferase (316 aa).

The protein belongs to the phosphate acetyltransferase and butyryltransferase family.

The protein localises to the cytoplasm. The catalysed reaction is acetyl-CoA + phosphate = acetyl phosphate + CoA. It participates in metabolic intermediate biosynthesis; acetyl-CoA biosynthesis; acetyl-CoA from acetate: step 2/2. The protein is Phosphate acetyltransferase (pta) of Rhizobium meliloti (Ensifer meliloti).